The sequence spans 445 residues: FAS-associated factor 2-A (445 aa).

The 42-residue stretch at glutamate 12–glutamate 53 folds into the UBA domain. The stretch at serine 275–glutamate 353 forms a coiled coil. Positions arginine 302–proline 354 are disordered. Positions alanine 303 to glutamate 348 are enriched in basic and acidic residues. One can recognise a UBX domain in the interval aspartate 357–valine 439.

It is found in the cytoplasm. Its subcellular location is the lipid droplet. The protein localises to the endoplasmic reticulum. Its function is as follows. Plays an important role in endoplasmic reticulum-associated degradation (ERAD) that mediates ubiquitin-dependent degradation of misfolded endoplasmic reticulum proteins. Involved in inhibition of lipid droplet degradation. Involved in stress granule disassembly. This chain is FAS-associated factor 2-A (faf2-a), found in Xenopus laevis (African clawed frog).